Here is a 275-residue protein sequence, read N- to C-terminus: Lycopene elongase/hydratase (275 aa).

The next 9 helical transmembrane spans lie at 13 to 33 (FWLY…TTVG), 38 to 58 (APAV…LYGI), 84 to 104 (AAVA…AAPL), 107 to 127 (EAWP…APPL), 134 to 154 (VLDS…YAGV), 160 to 180 (PLLA…FSAI), 203 to 223 (ALAY…LVDV), 225 to 245 (FGLL…LQVA), and 253 to 273 (YPAV…WGVV).

It belongs to the UbiA prenyltransferase family.

It localises to the cell membrane. It carries out the reaction all-trans-lycopene + dimethylallyl diphosphate + H2O = dihydroisopentenyldehydrorhodopin + diphosphate. It catalyses the reaction isopentenyldehydrorhodopin + dimethylallyl diphosphate + H2O = dihydrobisanhydrobacterioruberin + diphosphate. Its pathway is carotenoid biosynthesis. Inhibited by bacterioopsin. Involved in the biosynthesis of the acyclic C50 carotenoid bacterioruberin (BR). Acts as a bifunctional elongase/hydratase that catalyzes the elongation of lycopene by attaching a C(5) isoprene unit at C-2, as well as the hydroxylation of the previous end of the molecule. The enzyme acts at both ends of the substrate, and catalyzes the conversion of lycopene to the C(45) intermediate dihydroisopentenyldehydrorhodopin (DH-IDR) and the conversion of isopentenyldehydrorhodopin (IDR) to the C(50) carotenoid dihydrobisanhydrobacterioruberin (DH-BABR). Can also catalyze the conversion of lycopene to tetrahydrobisanhydrobacterioruberin (TH-BABR). The protein is Lycopene elongase/hydratase of Halobacterium salinarum (strain ATCC 700922 / JCM 11081 / NRC-1) (Halobacterium halobium).